Reading from the N-terminus, the 481-residue chain is tRNA sulfurtransferase (481 aa).

Positions 54–156 constitute a THUMP domain; it reads ADGDGPLRHI…GKDVFFYHEI (103 aa). Residues 174–175, K256, G278, and Q287 contribute to the ATP site; that span reads LV. A disulfide bridge connects residues C334 and C433. The Rhodanese domain occupies 388–463; the sequence is IPKDAVIIDL…YYSTFSDLKK (76 aa). The active-site Cysteine persulfide intermediate is the C433.

This sequence belongs to the ThiI family.

The protein localises to the cytoplasm. It catalyses the reaction [ThiI sulfur-carrier protein]-S-sulfanyl-L-cysteine + a uridine in tRNA + 2 reduced [2Fe-2S]-[ferredoxin] + ATP + H(+) = [ThiI sulfur-carrier protein]-L-cysteine + a 4-thiouridine in tRNA + 2 oxidized [2Fe-2S]-[ferredoxin] + AMP + diphosphate. The catalysed reaction is [ThiS sulfur-carrier protein]-C-terminal Gly-Gly-AMP + S-sulfanyl-L-cysteinyl-[cysteine desulfurase] + AH2 = [ThiS sulfur-carrier protein]-C-terminal-Gly-aminoethanethioate + L-cysteinyl-[cysteine desulfurase] + A + AMP + 2 H(+). Its pathway is cofactor biosynthesis; thiamine diphosphate biosynthesis. Functionally, catalyzes the ATP-dependent transfer of a sulfur to tRNA to produce 4-thiouridine in position 8 of tRNAs, which functions as a near-UV photosensor. Also catalyzes the transfer of sulfur to the sulfur carrier protein ThiS, forming ThiS-thiocarboxylate. This is a step in the synthesis of thiazole, in the thiamine biosynthesis pathway. The sulfur is donated as persulfide by IscS. This is tRNA sulfurtransferase from Thermoplasma acidophilum (strain ATCC 25905 / DSM 1728 / JCM 9062 / NBRC 15155 / AMRC-C165).